Consider the following 377-residue polypeptide: UPF0754 membrane protein lin2327 (377 aa).

The next 2 helical transmembrane spans lie at 1–21 (MSVL…GAMT) and 357–377 (YLGG…AMWI).

It belongs to the UPF0754 family.

It localises to the cell membrane. The sequence is that of UPF0754 membrane protein lin2327 from Listeria innocua serovar 6a (strain ATCC BAA-680 / CLIP 11262).